A 169-amino-acid chain; its full sequence is Myosin regulatory light chain 11 (169 aa).

Ala2 is modified (n,N,N-trimethylalanine). Phosphoserine occurs at positions 15 and 16. Phosphothreonine occurs at positions 25 and 35. In terms of domain architecture, EF-hand 1 spans 25–60; it reads TQIQEFKEAFTVIDQNRDGIIDKEDLRDTFAAMGRL. Ca(2+) contacts are provided by Asp38, Asn40, Asp42, and Asp49. Ser75 bears the Phosphoserine mark. 2 EF-hand domains span residues 95-130 and 131-166; these read DPEDVITGAFKVLDPEGKGTIKKKFLEELLTTQCDR and FSQEEIKNMWAAFPPDVGGNVDYKNICYVITHGDAK. The residue at position 101 (Thr101) is a Phosphothreonine.

In terms of assembly, myosin is a hexamer of 2 heavy chains and 4 light chains. In terms of tissue distribution, expressed in fetal and adult skeletal muscle.

Its function is as follows. Myosin regulatory subunit that plays an essential role to maintain muscle integrity during early development. Plays a role in muscle contraction. In Homo sapiens (Human), this protein is Myosin regulatory light chain 11.